Consider the following 310-residue polypeptide: tRNA uridine(34) hydroxylase (310 aa).

The region spanning 134–232 (DDPDTLLIDT…YFEEVSQSES (99 aa)) is the Rhodanese domain. Cys-192 acts as the Cysteine persulfide intermediate in catalysis.

It belongs to the TrhO family.

The enzyme catalyses uridine(34) in tRNA + AH2 + O2 = 5-hydroxyuridine(34) in tRNA + A + H2O. Its function is as follows. Catalyzes oxygen-dependent 5-hydroxyuridine (ho5U) modification at position 34 in tRNAs. The protein is tRNA uridine(34) hydroxylase of Prochlorococcus marinus (strain MIT 9303).